Consider the following 286-residue polypeptide: S-methyl-5'-thioadenosine phosphorylase (286 aa).

Residues serine 11, 53 to 54, and 86 to 87 contribute to the phosphate site; these read RH and SA. Methionine 185 lines the substrate pocket. Threonine 186 contributes to the phosphate binding site. A substrate-binding site is contributed by 209–211; sequence DYD.

This sequence belongs to the PNP/MTAP phosphorylase family. MTAP subfamily. Homohexamer. Dimer of a homotrimer.

It catalyses the reaction S-methyl-5'-thioadenosine + phosphate = 5-(methylsulfanyl)-alpha-D-ribose 1-phosphate + adenine. Its pathway is amino-acid biosynthesis; L-methionine biosynthesis via salvage pathway; S-methyl-5-thio-alpha-D-ribose 1-phosphate from S-methyl-5'-thioadenosine (phosphorylase route): step 1/1. In terms of biological role, catalyzes the reversible phosphorylation of S-methyl-5'-thioadenosine (MTA) to adenine and 5-methylthioribose-1-phosphate. Involved in the breakdown of MTA, a major by-product of polyamine biosynthesis. Responsible for the first step in the methionine salvage pathway after MTA has been generated from S-adenosylmethionine. Has broad substrate specificity with 6-aminopurine nucleosides as preferred substrates. The polypeptide is S-methyl-5'-thioadenosine phosphorylase (Geobacter sulfurreducens (strain ATCC 51573 / DSM 12127 / PCA)).